The chain runs to 769 residues: Integrin beta-2 (769 aa).

An N-terminal signal peptide occupies residues 1–22 (MLRQRPQLLLLAGLLALQSVLS). Position 23 is a pyrrolidone carboxylic acid (Q23). The Extracellular portion of the chain corresponds to 23–700 (QECTNYKVST…DMLECVKGPN (678 aa)). The 51-residue stretch at 24–74 (ECTNYKVSTCRDCIESGPGCAWCQKLNFTGQGEPDSIRCDTRAELLSKGCP) folds into the PSI domain. 28 cysteine pairs are disulfide-bonded: C25–C43, C33–C447, C36–C62, C46–C73, C191–C198, C246–C286, C386–C400, C420–C445, C449–C467, C459–C470, C472–C481, C483–C514, C497–C512, C506–C517, C519–C534, C536–C559, C541–C557, C549–C562, C564–C573, C575–C598, C582–C596, C590–C601, C603–C612, C615–C618, C622–C662, C628–C647, C631–C643, and C670–C695. N-linked (GlcNAc...) asparagine glycosylation is found at N50 and N116. Residues 124 to 363 (GYPIDLYYLM…ELIKNAYNKL (240 aa)) enclose the VWFA domain. Residues S136 and S138 each contribute to the Mg(2+) site. Ca(2+) contacts are provided by S138, D141, D142, and D173. The Ca(2+) site is built by N229, D231, P233, and E234. Residue E234 coordinates Mg(2+). A glycan (N-linked (GlcNAc...) asparagine) is linked at N254. The Ca(2+) site is built by D264 and E347. The short motif at 397-399 (RGD) is the Cell attachment site element. I-EGF domains lie at 449–482 (CRDA…KNCE), 483–535 (CQTQ…QFCE), 536–574 (CDNV…SACQ), and 575–613 (CLKS…PLCS). N-linked (GlcNAc...) asparagine glycosylation occurs at N501. N-linked (GlcNAc...) asparagine glycosylation occurs at N642. Residues 701–723 (IAAIVGGTVGGVVLVGILLLVIW) traverse the membrane as a helical segment. The Cytoplasmic portion of the chain corresponds to 724–769 (KALTHLSDLREYHRFEKEKLKSQWNNDNPLFKSATTTVMNPKFAES). 2 positions are modified to phosphoserine: S745 and S756. Residues T758 and T760 each carry the phosphothreonine modification.

The protein belongs to the integrin beta chain family. Heterodimer of an alpha and a beta subunit. The ITGB2 beta subunit associates with the ITGAL, ITGAM, ITGAX or ITGAD alpha subunits. Found in a complex with CD177 and ITGAM/CD11b. Interacts with FGR. Interacts with COPS5 and RANBP9. Interacts with FLNA (via filamin repeats 4, 9, 12, 17, 19, 21, and 23). Interacts with THBD. Both Ser-745 and Ser-756 become phosphorylated when T-cells are exposed to phorbol esters. Phosphorylation on Thr-758 (but not on Ser-756) allows interaction with 14-3-3 proteins.

The protein localises to the cell membrane. It localises to the membrane raft. Integrin ITGAL/ITGB2 is a receptor for ICAM1, ICAM2, ICAM3 and ICAM4. Integrin ITGAL/ITGB2 is also a receptor for the secreted form of ubiquitin-like protein ISG15; the interaction is mediated by ITGAL. Integrins ITGAM/ITGB2 and ITGAX/ITGB2 are receptors for the iC3b fragment of the third complement component and for fibrinogen. Integrin ITGAX/ITGB2 recognizes the sequence G-P-R in fibrinogen alpha-chain. Integrin ITGAM/ITGB2 recognizes P1 and P2 peptides of fibrinogen gamma chain. Integrin ITGAM/ITGB2 is also a receptor for factor X. Integrin ITGAD/ITGB2 is a receptor for ICAM3 and VCAM1. Contributes to natural killer cell cytotoxicity. Involved in leukocyte adhesion and transmigration of leukocytes including T-cells and neutrophils. Triggers neutrophil transmigration during lung injury through PTK2B/PYK2-mediated activation. Integrin ITGAL/ITGB2 in association with ICAM3, contributes to apoptotic neutrophil phagocytosis by macrophages. This is Integrin beta-2 (ITGB2) from Bos taurus (Bovine).